The chain runs to 116 residues: Beta-2-microglobulin (116 aa).

Positions 1–19 (MRALITFALLCLLYITVQG) are cleaved as a signal peptide. In terms of domain architecture, Ig-like C1-type spans 24 to 111 (PKVHVYSHFP…RHMKETKKFS (88 aa)). An intrachain disulfide couples cysteine 44 to cysteine 99.

This sequence belongs to the beta-2-microglobulin family. As to quaternary structure, heterodimer of an alpha chain and a beta chain. Beta-2-microglobulin is the beta-chain of major histocompatibility complex class I molecules.

It is found in the secreted. Component of the class I major histocompatibility complex (MHC). Involved in the presentation of peptide antigens to the immune system. The sequence is that of Beta-2-microglobulin (b2m) from Danio rerio (Zebrafish).